The following is a 107-amino-acid chain: Pathogenesis-related protein PR-4 (107 aa).

Residues 1–107 (QNINWDLRTA…VNYDFVDCGD (107 aa)) enclose the Barwin domain. 3 disulfides stabilise this stretch: Cys-14-Cys-46, Cys-35-Cys-69, and Cys-49-Cys-105.

As to expression, preferentially expressed in the tissue surrounding the abscission zone of fruitlets.

The protein resides in the secreted. The protein localises to the cell wall. Functionally, may be involved in protecting plant tissues from pathogen infection. This chain is Pathogenesis-related protein PR-4, found in Prunus persica (Peach).